A 314-amino-acid polypeptide reads, in one-letter code: L-lactate dehydrogenase 1 (314 aa).

NAD(+)-binding positions include valine 16, aspartate 37, lysine 42, tyrosine 68, and 82 to 83 (GL). Substrate contacts are provided by residues glutamine 85, arginine 91, and 123 to 126 (NPVD). Residues 121–123 (ATN) and serine 146 contribute to the NAD(+) site. Residue 151-154 (DSAR) participates in substrate binding. Positions 156 and 171 each coordinate beta-D-fructose 1,6-bisphosphate. Histidine 178 functions as the Proton acceptor in the catalytic mechanism. Tyrosine 223 carries the phosphotyrosine modification. Substrate is bound at residue threonine 232.

Belongs to the LDH/MDH superfamily. LDH family. Homotetramer.

It localises to the cytoplasm. The catalysed reaction is (S)-lactate + NAD(+) = pyruvate + NADH + H(+). It functions in the pathway fermentation; pyruvate fermentation to lactate; (S)-lactate from pyruvate: step 1/1. With respect to regulation, allosterically activated by fructose 1,6-bisphosphate (FBP). Catalyzes the conversion of lactate to pyruvate. The protein is L-lactate dehydrogenase 1 of Bacillus cereus (strain ATCC 14579 / DSM 31 / CCUG 7414 / JCM 2152 / NBRC 15305 / NCIMB 9373 / NCTC 2599 / NRRL B-3711).